The primary structure comprises 276 residues: Chymotrypsin (276 aa).

A signal peptide spans 1 to 16 (MKVALVVLALFGVSLA). A propeptide spans 17–45 (ASIDNIEIPPSKNIYVEPINQPEVDPSLE) (activation peptide). The 227-residue stretch at 46 to 272 (IVNGQEVVPH…YLNWLQTHSE (227 aa)) folds into the Peptidase S1 domain. A disulfide bond links cysteine 74 and cysteine 90. Catalysis depends on charge relay system residues histidine 89 and aspartate 135. 2 N-linked (GlcNAc...) asparagine glycosylation sites follow: asparagine 144 and asparagine 193. Disulfide bonds link cysteine 202–cysteine 215 and cysteine 225–cysteine 250. Catalysis depends on serine 229, which acts as the Charge relay system.

Belongs to the peptidase S1 family. As to expression, expressed in larval carcasses and gut, and adult gut.

The protein resides in the secreted. It is found in the extracellular space. The enzyme catalyses Preferential cleavage: Tyr-|-Xaa, Trp-|-Xaa, Phe-|-Xaa, Leu-|-Xaa.. In terms of biological role, serine protease with chymotryptic and collagenolytic activities. The sequence is that of Chymotrypsin from Phaedon cochleariae (Mustard beetle).